Reading from the N-terminus, the 185-residue chain is Elongation factor P (185 aa).

The protein belongs to the elongation factor P family.

The protein resides in the cytoplasm. It functions in the pathway protein biosynthesis; polypeptide chain elongation. In terms of biological role, involved in peptide bond synthesis. Stimulates efficient translation and peptide-bond synthesis on native or reconstituted 70S ribosomes in vitro. Probably functions indirectly by altering the affinity of the ribosome for aminoacyl-tRNA, thus increasing their reactivity as acceptors for peptidyl transferase. This chain is Elongation factor P, found in Oleidesulfovibrio alaskensis (strain ATCC BAA-1058 / DSM 17464 / G20) (Desulfovibrio alaskensis).